Consider the following 96-residue polypeptide: Evasin P1078 (96 aa).

Residues 1–28 form the signal peptide; sequence MAFNTITFLQWAVFVAILFNMNLHSASA. Disulfide bonds link Cys-48/Cys-67, Cys-52/Cys-69, and Cys-63/Cys-80. The N-linked (GlcNAc...) asparagine glycan is linked to Asn-51. Asn-74 carries an N-linked (GlcNAc...) asparagine glycan.

The protein resides in the secreted. Its function is as follows. Salivary chemokine-binding protein which binds to host chemokines CXCL1, CXCL2, CXCL3, CXCL5, CXCL6, CXCL11 and CXCL13. In Ixodes ricinus (Common tick), this protein is Evasin P1078.